The primary structure comprises 78 residues: Hainantoxin-XX.3 (78 aa).

An N-terminal signal peptide occupies residues 1-23; that stretch reads MKSATLLALSFLLIASCFLICEA. A propeptide spanning residues 24–47 is cleaved from the precursor; the sequence is EHSRYEEHEILEENMGDVVNLEQR. 3 disulfide bridges follow: cysteine 49–cysteine 62, cysteine 56–cysteine 66, and cysteine 61–cysteine 77.

It belongs to the hainantoxin family. 20 subfamily. In terms of tissue distribution, expressed by the venom gland.

The protein localises to the secreted. Its function is as follows. Putative ion channel inhibitor. The protein is Hainantoxin-XX.3 of Cyriopagopus hainanus (Chinese bird spider).